A 72-amino-acid chain; its full sequence is Translation initiation factor IF-1 (72 aa).

The 72-residue stretch at 1–72 folds into the S1-like domain; it reads MSKEEAIEVE…TRGRITYRAK (72 aa).

It belongs to the IF-1 family. Component of the 30S ribosomal translation pre-initiation complex which assembles on the 30S ribosome in the order IF-2 and IF-3, IF-1 and N-formylmethionyl-tRNA(fMet); mRNA recruitment can occur at any time during PIC assembly.

The protein localises to the cytoplasm. Functionally, one of the essential components for the initiation of protein synthesis. Stabilizes the binding of IF-2 and IF-3 on the 30S subunit to which N-formylmethionyl-tRNA(fMet) subsequently binds. Helps modulate mRNA selection, yielding the 30S pre-initiation complex (PIC). Upon addition of the 50S ribosomal subunit IF-1, IF-2 and IF-3 are released leaving the mature 70S translation initiation complex. The chain is Translation initiation factor IF-1 from Geotalea uraniireducens (strain Rf4) (Geobacter uraniireducens).